We begin with the raw amino-acid sequence, 744 residues long: Putative pre-mRNA-splicing factor ATP-dependent RNA helicase DHX32 (744 aa).

Residue Met-1 is modified to N-acetylmethionine. The disordered stretch occupies residues 1–28 (MDEEELDHPNASPEKRYFPESLDSSDGD). A Helicase ATP-binding domain is found at 72–270 (MESLLQNQVV…RLIFEIHRSG (199 aa)). 85 to 92 (GDSKCGKS) contributes to the ATP binding site. A DEAH box motif is present at residues 185–188 (DDVH). The Helicase C-terminal domain maps to 258 to 438 (SVIRLIFEIH…SMVLFMKRVD (181 aa)).

It belongs to the DEAD box helicase family. DEAH subfamily.

It is found in the nucleus. Its subcellular location is the mitochondrion. It carries out the reaction ATP + H2O = ADP + phosphate + H(+). The polypeptide is Putative pre-mRNA-splicing factor ATP-dependent RNA helicase DHX32 (Dhx32) (Mus musculus (Mouse)).